The sequence spans 930 residues: RNA-binding protein 10 (930 aa).

2 stretches are compositionally biased toward basic and acidic residues: residues 1-14 (MEYE…DRTG) and 21-45 (RSQD…RSYP). The disordered stretch occupies residues 1-127 (MEYERRGGRG…EEDEEEEEKA (127 aa)). Glu2 is subject to N-acetylserine. Residues Arg30, Ser61, and Ser89 each carry the phosphoserine modification. A compositionally biased stretch (acidic residues) spans 59–70 (DSSEEQSAEDSY). Positions 80–89 (RRRRRRHRHS) are enriched in basic residues. The segment covering 98–111 (RDGDYRDQDYRTEQ) has biased composition (basic and acidic residues). The segment covering 112 to 125 (GEEEEEEEDEEEEE) has biased composition (acidic residues). One can recognise an RRM 1 domain in the interval 129-209 (NIVMLRMLPQ…QKVSMHYSDP (81 aa)). The RanBP2-type zinc-finger motif lies at 212 to 242 (KINEDWLCNKCGVQNFKRREKCFKCGVPKSE). Positions 300–384 (DTIILRNLNP…KTINVEFAKG (85 aa)) constitute an RRM 2 domain. Residue Lys383 is modified to N6-acetyllysine. Disordered regions lie at residues 466–524 (PGIT…AANS), 537–569 (SELQ…VPDV), 620–685 (EQSA…DERR), and 700–753 (KGAL…EEKL). The span at 508–524 (YQQSAEASSSQGTAANS) shows a compositional bias: polar residues. The segment covering 541–557 (SPTHPSSALPPATSPTA) has biased composition (low complexity). 3 stretches are compositionally biased toward basic and acidic residues: residues 623-639 (ADGH…GKEK), 653-669 (KDME…KENF), and 700-709 (KGALAERQHT). 5 positions are modified to phosphoserine: Ser718, Ser723, Ser733, Ser736, and Ser738. The span at 743 to 753 (ERGGPEREEKL) shows a compositional bias: basic and acidic residues. The C2H2-type; atypical zinc finger occupies 759–784 (LACLLCRRQFPSKEALIRHQQLSGLH). Ser781 and Ser797 each carry phosphoserine. Residues 815-826 (RDRAAERREKYG) show a composition bias toward basic and acidic residues. Residues 815–861 (RDRAAERREKYGIPEPPEPKRRKYGGISTASVDFEQPTRDGLGSDNI) form a disordered region. Ser845 carries the phosphoserine modification. The G-patch domain occupies 858–904 (SDNIGSRMLQAMGWKEGSGLGRKKQGIVTPIEAQTRVRGSGLGARGS). An Omega-N-methylarginine modification is found at Arg902.

Associates with the spliceosome. Component of a large chromatin remodeling complex, at least composed of MYSM1, PCAF, RBM10 and KIF11/TRIP5.

The protein localises to the nucleus. Its function is as follows. Binds to ssRNA containing the consensus sequence 5'-AGGUAA-3'. May be involved in post-transcriptional processing, most probably in mRNA splicing. Binds to RNA homopolymers, with a preference for poly(G) and poly(U) and little for poly(A). May bind to specific miRNA hairpins. The sequence is that of RNA-binding protein 10 from Homo sapiens (Human).